Reading from the N-terminus, the 153-residue chain is Arginine repressor (153 aa).

It belongs to the ArgR family.

It is found in the cytoplasm. It participates in amino-acid biosynthesis; L-arginine biosynthesis [regulation]. Regulates arginine biosynthesis genes. This is Arginine repressor from Glaesserella parasuis serovar 5 (strain SH0165) (Haemophilus parasuis).